Reading from the N-terminus, the 293-residue chain is Formamidopyrimidine-DNA glycosylase (293 aa).

Pro-2 (schiff-base intermediate with DNA) is an active-site residue. Residue Glu-3 is the Proton donor of the active site. Residue Lys-60 is the Proton donor; for beta-elimination activity of the active site. DNA contacts are provided by His-110, Arg-129, and Lys-174. The FPG-type zinc-finger motif lies at 259-293 (NVYRRTGKKCHACKNLIERQKISGRSTHWCRKCQK). Arg-283 serves as the catalytic Proton donor; for delta-elimination activity.

This sequence belongs to the FPG family. Monomer. Requires Zn(2+) as cofactor.

The enzyme catalyses Hydrolysis of DNA containing ring-opened 7-methylguanine residues, releasing 2,6-diamino-4-hydroxy-5-(N-methyl)formamidopyrimidine.. The catalysed reaction is 2'-deoxyribonucleotide-(2'-deoxyribose 5'-phosphate)-2'-deoxyribonucleotide-DNA = a 3'-end 2'-deoxyribonucleotide-(2,3-dehydro-2,3-deoxyribose 5'-phosphate)-DNA + a 5'-end 5'-phospho-2'-deoxyribonucleoside-DNA + H(+). Involved in base excision repair of DNA damaged by oxidation or by mutagenic agents. Acts as a DNA glycosylase that recognizes and removes damaged bases. Has a preference for oxidized purines, such as 7,8-dihydro-8-oxoguanine (8-oxoG). Has AP (apurinic/apyrimidinic) lyase activity and introduces nicks in the DNA strand. Cleaves the DNA backbone by beta-delta elimination to generate a single-strand break at the site of the removed base with both 3'- and 5'-phosphates. This is Formamidopyrimidine-DNA glycosylase from Prochlorococcus marinus (strain MIT 9515).